We begin with the raw amino-acid sequence, 54 residues long: UPF0235 protein in proC 3'region (54 aa).

It belongs to the UPF0235 family.

The protein is UPF0235 protein in proC 3'region of Vibrio alginolyticus.